We begin with the raw amino-acid sequence, 83 residues long: Alpha-elapitoxin-Ppr1 (83 aa).

Residues 1-21 (MKTLLLTLVVVTIVCLDLGYT) form the signal peptide. 4 cysteine pairs are disulfide-bonded: Cys24–Cys45, Cys38–Cys62, Cys64–Cys75, and Cys76–Cys81.

It belongs to the three-finger toxin family. Short-chain subfamily. Type I alpha-neurotoxin sub-subfamily. Expressed by the venom gland.

It localises to the secreted. Functionally, bird-specific neurotoxin (tested on chicken) that acts as a pseudo-irreversible antagonist at the nicotinic acetylcholine receptor (nAChR) of the skeletal neuromuscular junction. Has no significant effect on the electrically-induced twitches of the rat isolated phrenic nerve-diaphragm preparation. In Pseudechis porphyriacus (Red-bellied black snake), this protein is Alpha-elapitoxin-Ppr1.